A 241-amino-acid chain; its full sequence is Ashwin (241 aa).

Disordered regions lie at residues 1–21 (MAAQGRGRVGGGKEERVSARS), 82–102 (KMMEKKRKQNEPKSENKSVTA), and 212–241 (KRSVPKDESDLPNDLKPTEAKKKIQHCTWP). Residues 11 to 21 (GGKEERVSARS) show a composition bias toward basic and acidic residues.

It belongs to the ashwin family.

The protein resides in the nucleus. In Gallus gallus (Chicken), this protein is Ashwin.